The sequence spans 335 residues: Anthranilate phosphoribosyltransferase (335 aa).

5-phospho-alpha-D-ribose 1-diphosphate is bound by residues G79, 82–83 (GD), S87, 89–92 (NIST), 107–115 (KHGNRSISS), and S119. G79 contributes to the anthranilate binding site. Residue S91 coordinates Mg(2+). N110 lines the anthranilate pocket. R165 is a binding site for anthranilate. The Mg(2+) site is built by D224 and E225.

The protein belongs to the anthranilate phosphoribosyltransferase family. Homodimer. It depends on Mg(2+) as a cofactor.

The enzyme catalyses N-(5-phospho-beta-D-ribosyl)anthranilate + diphosphate = 5-phospho-alpha-D-ribose 1-diphosphate + anthranilate. It participates in amino-acid biosynthesis; L-tryptophan biosynthesis; L-tryptophan from chorismate: step 2/5. Its function is as follows. Catalyzes the transfer of the phosphoribosyl group of 5-phosphorylribose-1-pyrophosphate (PRPP) to anthranilate to yield N-(5'-phosphoribosyl)-anthranilate (PRA). The polypeptide is Anthranilate phosphoribosyltransferase (Streptococcus mutans serotype c (strain ATCC 700610 / UA159)).